We begin with the raw amino-acid sequence, 297 residues long: Lipoyl synthase (297 aa).

Positions 40, 45, 51, 67, 71, 74, and 280 each coordinate [4Fe-4S] cluster. Positions 53 to 269 (AVRKTATFMI…KEIALSKGFS (217 aa)) constitute a Radical SAM core domain.

The protein belongs to the radical SAM superfamily. Lipoyl synthase family. The cofactor is [4Fe-4S] cluster.

It is found in the cytoplasm. The catalysed reaction is [[Fe-S] cluster scaffold protein carrying a second [4Fe-4S](2+) cluster] + N(6)-octanoyl-L-lysyl-[protein] + 2 oxidized [2Fe-2S]-[ferredoxin] + 2 S-adenosyl-L-methionine + 4 H(+) = [[Fe-S] cluster scaffold protein] + N(6)-[(R)-dihydrolipoyl]-L-lysyl-[protein] + 4 Fe(3+) + 2 hydrogen sulfide + 2 5'-deoxyadenosine + 2 L-methionine + 2 reduced [2Fe-2S]-[ferredoxin]. It participates in protein modification; protein lipoylation via endogenous pathway; protein N(6)-(lipoyl)lysine from octanoyl-[acyl-carrier-protein]. Its function is as follows. Catalyzes the radical-mediated insertion of two sulfur atoms into the C-6 and C-8 positions of the octanoyl moiety bound to the lipoyl domains of lipoate-dependent enzymes, thereby converting the octanoylated domains into lipoylated derivatives. This Bacillus cereus (strain ATCC 14579 / DSM 31 / CCUG 7414 / JCM 2152 / NBRC 15305 / NCIMB 9373 / NCTC 2599 / NRRL B-3711) protein is Lipoyl synthase.